The following is a 141-amino-acid chain: MSITVLAFDFGTKSIGCAVGQSITGTAQALPAFKAQDGIPDWLKIEKCLKDWQPNIVVVGLPLNMDGSEQDLTHLARKFANRLNGRFGVKVELQDERLTTKQARDEIFQRGGYRALKKEKVDSISACLILESWFENGACGE.

Belongs to the YqgF nuclease family.

Its subcellular location is the cytoplasm. Functionally, could be a nuclease involved in processing of the 5'-end of pre-16S rRNA. This Histophilus somni (strain 129Pt) (Haemophilus somnus) protein is Putative pre-16S rRNA nuclease.